The following is a 40-amino-acid chain: Dolichyl-diphosphooligosaccharide--protein glycosyltransferase subunit 4 (40 aa).

Residues 1 to 7 (MITDMQL) are Lumenal-facing. Residues 8–28 (AIFSNVLGVFLFLLVVAYHYI) form a helical membrane-spanning segment. At 29-40 (NANTGKPSAKAK) the chain is on the cytoplasmic side.

This sequence belongs to the OST4 family. In terms of assembly, component of the oligosaccharyltransferase (OST) complex.

It localises to the endoplasmic reticulum membrane. Functionally, subunit of the oligosaccharyl transferase (OST) complex that catalyzes the initial transfer of a defined glycan (Glc(3)Man(9)GlcNAc(2) in eukaryotes) from the lipid carrier dolichol-pyrophosphate to an asparagine residue within an Asn-X-Ser/Thr consensus motif in nascent polypeptide chains, the first step in protein N-glycosylation. N-glycosylation occurs cotranslationally and the complex associates with the Sec61 complex at the channel-forming translocon complex that mediates protein translocation across the endoplasmic reticulum (ER). All subunits are required for a maximal enzyme activity. The sequence is that of Dolichyl-diphosphooligosaccharide--protein glycosyltransferase subunit 4 from Drosophila sechellia (Fruit fly).